The sequence spans 307 residues: Oxygen-dependent coproporphyrinogen-III oxidase (307 aa).

S99 lines the substrate pocket. Residues H103 and H113 each contribute to the a divalent metal cation site. The active-site Proton donor is the H113. 115–117 lines the substrate pocket; it reads NVR. Positions 152 and 182 each coordinate a divalent metal cation. Positions 247-282 are important for dimerization; that stretch reads YVEFNLVFDRGTLFGLQSGGRTESILMSMPPVANWR. 265–267 contributes to the substrate binding site; it reads GGR.

Belongs to the aerobic coproporphyrinogen-III oxidase family. Homodimer. Requires a divalent metal cation as cofactor.

The protein resides in the cytoplasm. It catalyses the reaction coproporphyrinogen III + O2 + 2 H(+) = protoporphyrinogen IX + 2 CO2 + 2 H2O. Its pathway is porphyrin-containing compound metabolism; protoporphyrin-IX biosynthesis; protoporphyrinogen-IX from coproporphyrinogen-III (O2 route): step 1/1. Its function is as follows. Involved in the heme biosynthesis. Catalyzes the aerobic oxidative decarboxylation of propionate groups of rings A and B of coproporphyrinogen-III to yield the vinyl groups in protoporphyrinogen-IX. The chain is Oxygen-dependent coproporphyrinogen-III oxidase from Burkholderia cenocepacia (strain ATCC BAA-245 / DSM 16553 / LMG 16656 / NCTC 13227 / J2315 / CF5610) (Burkholderia cepacia (strain J2315)).